The sequence spans 696 residues: L-amino-acid oxidase (696 aa).

A propeptide spanning residues M1–R130 is cleaved from the precursor. Residues E207, R215, M236–R237, and V440 each bind FAD. Residue R237 participates in substrate binding. Y564 is a substrate binding site. Residues E649 and I658 to A661 each bind FAD.

This sequence belongs to the flavin monoamine oxidase family. FAD serves as cofactor.

The enzyme catalyses an L-alpha-amino acid + O2 + H2O = a 2-oxocarboxylate + H2O2 + NH4(+). The chain is L-amino-acid oxidase (lox) from Neurospora crassa (strain ATCC 24698 / 74-OR23-1A / CBS 708.71 / DSM 1257 / FGSC 987).